Here is a 499-residue protein sequence, read N- to C-terminus: Glycerol kinase 2 (499 aa).

An ADP-binding site is contributed by Thr-13. ATP contacts are provided by Thr-13, Thr-14, and Ser-15. Thr-13 is a binding site for sn-glycerol 3-phosphate. Position 17 (Arg-17) interacts with ADP. Arg-83, Glu-84, Tyr-134, and Asp-241 together coordinate sn-glycerol 3-phosphate. Residues Arg-83, Glu-84, Tyr-134, Asp-241, and Gln-242 each coordinate glycerol. The ADP site is built by Thr-263 and Gly-306. Thr-263, Gly-306, Gln-310, and Gly-407 together coordinate ATP. Gly-407 serves as a coordination point for ADP.

It belongs to the FGGY kinase family.

It carries out the reaction glycerol + ATP = sn-glycerol 3-phosphate + ADP + H(+). It functions in the pathway polyol metabolism; glycerol degradation via glycerol kinase pathway; sn-glycerol 3-phosphate from glycerol: step 1/1. Its function is as follows. Key enzyme in the regulation of glycerol uptake and metabolism. Catalyzes the phosphorylation of glycerol to yield sn-glycerol 3-phosphate. This chain is Glycerol kinase 2, found in Saccharolobus solfataricus (strain ATCC 35092 / DSM 1617 / JCM 11322 / P2) (Sulfolobus solfataricus).